The following is a 93-amino-acid chain: Acylphosphatase (93 aa).

C5 and C49 are joined by a disulfide. The 89-residue stretch at 5-93 (CIIAWVYGRV…ETLTGFSIRY (89 aa)) folds into the Acylphosphatase-like domain. The active site involves N38.

This sequence belongs to the acylphosphatase family.

The catalysed reaction is an acyl phosphate + H2O = a carboxylate + phosphate + H(+). This chain is Acylphosphatase, found in Salmonella paratyphi A (strain ATCC 9150 / SARB42).